The primary structure comprises 887 residues: DNA gyrase subunit A (887 aa).

Positions 35-501 (LPDVRDGLKP…GFENLEDEDL (467 aa)) constitute a Topo IIA-type catalytic domain. Y123 functions as the O-(5'-phospho-DNA)-tyrosine intermediate in the catalytic mechanism. Residues 528–534 (QNRGGRG) carry the GyrA-box motif. Residues 811–864 (KEDAEDETNEDEQSTSTVSEDGTEQQREAVVNDETPGNAIHTEVIDSEENDEDG) are disordered. Residues 813–823 (DAEDETNEDEQ) are compositionally biased toward acidic residues.

It belongs to the type II topoisomerase GyrA/ParC subunit family. As to quaternary structure, heterotetramer, composed of two GyrA and two GyrB chains. In the heterotetramer, GyrA contains the active site tyrosine that forms a transient covalent intermediate with DNA, while GyrB binds cofactors and catalyzes ATP hydrolysis.

It is found in the cytoplasm. The enzyme catalyses ATP-dependent breakage, passage and rejoining of double-stranded DNA.. A type II topoisomerase that negatively supercoils closed circular double-stranded (ds) DNA in an ATP-dependent manner to modulate DNA topology and maintain chromosomes in an underwound state. Negative supercoiling favors strand separation, and DNA replication, transcription, recombination and repair, all of which involve strand separation. Also able to catalyze the interconversion of other topological isomers of dsDNA rings, including catenanes and knotted rings. Type II topoisomerases break and join 2 DNA strands simultaneously in an ATP-dependent manner. This chain is DNA gyrase subunit A, found in Staphylococcus aureus (strain COL).